The following is a 654-amino-acid chain: Threonine--tRNA ligase (654 aa).

Residues 1–63 enclose the TGS domain; the sequence is MAQISLTFPD…DADASIAIHT (63 aa). The segment at 247–544 is catalytic; sequence DHRKLGREMN…LIENFAGKLP (298 aa). Zn(2+)-binding residues include C344, H395, and H521.

Belongs to the class-II aminoacyl-tRNA synthetase family. Homodimer. Requires Zn(2+) as cofactor.

The protein localises to the cytoplasm. It carries out the reaction tRNA(Thr) + L-threonine + ATP = L-threonyl-tRNA(Thr) + AMP + diphosphate + H(+). Catalyzes the attachment of threonine to tRNA(Thr) in a two-step reaction: L-threonine is first activated by ATP to form Thr-AMP and then transferred to the acceptor end of tRNA(Thr). Also edits incorrectly charged L-seryl-tRNA(Thr). This chain is Threonine--tRNA ligase, found in Dinoroseobacter shibae (strain DSM 16493 / NCIMB 14021 / DFL 12).